A 330-amino-acid chain; its full sequence is 1-aminocyclopropane-1-carboxylate oxidase 2 (330 aa).

The Fe2OG dioxygenase domain maps to 153-253; that stretch reads PNFGTKVSNY…RMSIASFYNP (101 aa). H177, D179, and H234 together coordinate Fe cation.

The protein belongs to the iron/ascorbate-dependent oxidoreductase family. In terms of assembly, monomer. It depends on Fe cation as a cofactor.

It carries out the reaction 1-aminocyclopropane-1-carboxylate + L-ascorbate + O2 = ethene + L-dehydroascorbate + hydrogen cyanide + CO2 + 2 H2O. The protein operates within alkene biosynthesis; ethylene biosynthesis via S-adenosyl-L-methionine; ethylene from S-adenosyl-L-methionine: step 2/2. This Malus domestica (Apple) protein is 1-aminocyclopropane-1-carboxylate oxidase 2 (ACO2).